We begin with the raw amino-acid sequence, 283 residues long: Pantothenate synthetase (283 aa).

Residue 26-33 coordinates ATP; the sequence is MGNLHAGH. Catalysis depends on histidine 33, which acts as the Proton donor. A (R)-pantoate-binding site is contributed by glutamine 57. Residue glutamine 57 coordinates beta-alanine. 144 to 147 contributes to the ATP binding site; the sequence is GRKD. Glutamine 150 serves as a coordination point for (R)-pantoate. Residues leucine 173 and 181-184 contribute to the ATP site; that span reads MSSR.

The protein belongs to the pantothenate synthetase family. In terms of assembly, homodimer.

The protein resides in the cytoplasm. The enzyme catalyses (R)-pantoate + beta-alanine + ATP = (R)-pantothenate + AMP + diphosphate + H(+). It functions in the pathway cofactor biosynthesis; (R)-pantothenate biosynthesis; (R)-pantothenate from (R)-pantoate and beta-alanine: step 1/1. Functionally, catalyzes the condensation of pantoate with beta-alanine in an ATP-dependent reaction via a pantoyl-adenylate intermediate. The polypeptide is Pantothenate synthetase (Thiobacillus denitrificans (strain ATCC 25259 / T1)).